The primary structure comprises 236 residues: Probable fimbrial chaperone EcpE (236 aa).

A signal peptide spans 1–27 (MFRRRGVTLTKALLTAVCMLAAPLTQA).

The protein belongs to the EcpB/EcpE family.

Functionally, part of the ecpRABCDE operon, which encodes the E.coli common pilus (ECP). ECP is found in both commensal and pathogenic strains and plays a dual role in early-stage biofilm development and host cell recognition. The chain is Probable fimbrial chaperone EcpE (ecpE) from Escherichia coli O157:H7.